The sequence spans 348 residues: Protein-arginine N-acetylglucosaminyltransferase SseK2 (348 aa).

UDP-N-acetyl-alpha-D-glucosamine-binding positions include 64–66 (QWF), Tyr88, and 237–240 (YLDA). Residues 239 to 241 (DAD) carry the DXD motif motif. Residue Asp241 participates in Mn(2+) binding. The active-site Proton acceptor is Glu271. UDP-N-acetyl-alpha-D-glucosamine contacts are provided by residues Asn338, Ser340, and 345–348 (SSWR). Mn(2+)-binding residues include Asn338 and Ser340.

Belongs to the glycosyltransferase NleB family. The cofactor is Mn(2+).

It localises to the secreted. The protein localises to the host Golgi apparatus. It carries out the reaction L-arginyl-[protein] + UDP-N-acetyl-alpha-D-glucosamine = N(omega)-(N-acetyl-beta-D-glucosaminyl)-L-arginyl-[protein] + UDP + H(+). Its activity is regulated as follows. Protein-arginine N-acetylglucosaminyltransferase activity is inhibited by 100066N compound (flavone analog) and 102644N compound (a substituted isoxazole). Protein-arginine N-acetylglucosaminyltransferase effector that catalyzes the transfer of a single N-acetylglucosamine (GlcNAc) to a conserved arginine residue in the death domain of host proteins such as FADD: arginine GlcNAcylation prevents homotypic/heterotypic death domain interactions. Also acts on host proteins without a death domain: catalyzes arginine GlcNAcylation of host small Rab1 GTPase, thereby preventing GTPase activity and leading to impaired host vesicular protein transport. In contrast to Ssek1, not able to disrupt TNF signaling in infected cells. This Salmonella typhimurium (strain SL1344) protein is Protein-arginine N-acetylglucosaminyltransferase SseK2.